The chain runs to 188 residues: Pterocarpan synthase 1 (188 aa).

The first 23 residues, 1–23, serve as a signal peptide directing secretion; the sequence is MAKSTTFFISLTLPFLLLSVVTA. N127 carries N-linked (GlcNAc...) asparagine glycosylation.

It belongs to the plant dirigent protein family. Homodimer.

It localises to the secreted. Its subcellular location is the extracellular space. It is found in the apoplast. The enzyme catalyses a (4R)-4,2'-dihydroxyisoflavan = a pterocarpan + H2O.. It carries out the reaction (3R,4R)-7,2'-dihydroxy-4'-methoxyisoflavanol = (-)-medicarpin + H2O. The catalysed reaction is (3S,4R)-7,2'-dihydroxy-4'-methoxyisoflavanol = (+)-medicarpin + H2O. It catalyses the reaction (3R,4R)-3-(6-hydroxy-1,3-benzodioxol-5-yl)-3,4-dihydro-2H-chromene-4,7-diol = (-)-maackiain + H2O. The enzyme catalyses (3R,4R)-7,2',4'-trihydroxyisoflavanol = (6aR,11aR)-3,9-dihydroxypterocarpan + H2O. Functionally, involved in pterocarpan phytoalexin biosynthesis. Catalyzes the last step in the biosynthesis of the phytoalexin medicarpin, and thereby contributes to plant defense reactions. Dirigent proteins impart stereoselectivity on the phenoxy radical-coupling reaction, yielding optically active lignans from two molecules of coniferyl alcohol in the biosynthesis of lignans, flavonolignans, and alkaloids and thus plays a central role in plant secondary metabolism. This Glycyrrhiza echinata (Licorice) protein is Pterocarpan synthase 1.